Consider the following 319-residue polypeptide: MRLRLLALAAAVLLGPAPEVCGALNVTVSPGPVVDYLEGENATLLCHVSQKRRKDSLLAVRWFFAPDGSQEALMVKMTKLRIIQYYGNFSRTANQQRLRLLEERRGVLYRLSVLTLRPTDQGQYVCKVQEISKHRNKWTAWSNGSSATEMRVISLKAGEDSSFEKKKVTWAFFEDLYVYAVLVCCVGILSVLLFTLVIAWQSVFHKRKSRVRHYLVKCPQNSSGETVTSVTSLAPLQPQKGKRQKKKVDVPPAVPAKAPIATTFHKPKLLKPQRKVALPKITEENLTYAELELIKPHRAAKGVPTSTVYAQILFEENQL.

The signal sequence occupies residues 1–23; the sequence is MRLRLLALAAAVLLGPAPEVCGA. An Ig-like domain is found at 24–154; that stretch reads LNVTVSPGPV…SSATEMRVIS (131 aa). Residues Asn-25 and Asn-41 are each glycosylated (N-linked (GlcNAc...) asparagine). Cysteines 46 and 126 form a disulfide. Asn-143 carries N-linked (GlcNAc...) asparagine glycosylation. Residues 180 to 200 traverse the membrane as a helical segment; that stretch reads AVLVCCVGILSVLLFTLVIAW.

Proteolytically cleaved to generate a bioactive peptide. In terms of tissue distribution, peptide Lv is widely expressed in various tissues and the central nervous system, including the retinal photoreceptor layer, hippocampus, olfactory bulb, and cerebellum.

Its subcellular location is the cell membrane. The protein resides in the secreted. In terms of biological role, peptide Lv enhances L-type voltage-gated calcium channel (L-VGCC) currents in retinal photoreceptors. The polypeptide is V-set and transmembrane domain-containing protein 4 (Vstm4) (Mus musculus (Mouse)).